The primary structure comprises 197 residues: GTP cyclohydrolase-2 (197 aa).

A GTP-binding site is contributed by 50–54 (RIHSE). Residues Cys55, Cys66, and Cys68 each coordinate Zn(2+). Residues Gln71, 93-95 (EGR), and Thr115 contribute to the GTP site. Asp127 functions as the Proton acceptor in the catalytic mechanism. The active-site Nucleophile is the Arg129. Residues Thr150 and Lys155 each contribute to the GTP site.

The protein belongs to the GTP cyclohydrolase II family. The cofactor is Zn(2+).

The enzyme catalyses GTP + 4 H2O = 2,5-diamino-6-hydroxy-4-(5-phosphoribosylamino)-pyrimidine + formate + 2 phosphate + 3 H(+). It participates in cofactor biosynthesis; riboflavin biosynthesis; 5-amino-6-(D-ribitylamino)uracil from GTP: step 1/4. Its function is as follows. Catalyzes the conversion of GTP to 2,5-diamino-6-ribosylamino-4(3H)-pyrimidinone 5'-phosphate (DARP), formate and pyrophosphate. This is GTP cyclohydrolase-2 from Neisseria meningitidis serogroup C (strain 053442).